The chain runs to 134 residues: Translation initiation factor 2 subunit beta (134 aa).

It belongs to the eIF-2-beta/eIF-5 family. Heterotrimer composed of an alpha, a beta and a gamma chain.

Functionally, eIF-2 functions in the early steps of protein synthesis by forming a ternary complex with GTP and initiator tRNA. The chain is Translation initiation factor 2 subunit beta from Pyrobaculum calidifontis (strain DSM 21063 / JCM 11548 / VA1).